Consider the following 658-residue polypeptide: MKRQFEIVSAYSPQGDQPVAIEKLVEGINSGKKKQVLLGATGTGKTFTISNVIKEVQKPTLVMAHNKTLAGQLYSELKDFFPNNAVEYFVSYYDYYQPEAYVPQTDTFIEKDAQINDEIDKLRHSATSALFERDDVIIVASVSCIYGLGSPEEYRELVVSLRVGMEKDRNQLLRELVDVQYGRNDIDFKRGTFRVRGDVVEIFPASLDEHCIRIEFFGDEIDRIREVNALTGEVLAERDHVAIFPASHFVTREEKMKVAIENIEKELEERLKELNDNGKLLEAQRIEQRTRYDLEMMREMGFCSGIENYSRHLTLRPAGATPYTLLDYFPEDFLIVMDESHVSVPQVRAMYNGDQARKQVLVDHGFRLPSALDNRPLTFDEFEEKTNQVIYVSATPGPYELEQSPEVIEQIIRPTGLLDPPIDIRPIEGQIDDLLGEIQDRIAKNERVLITTLTKKMSEDLTDYLKDVGIKVNYLHSEVKTLERIEIIRDLRLGKFDVLVGINLLREGLDIPEVSLVAILDADKEGFLRSERSLIQTIGRAARNENGRVIMYADRITRSMGIAIEETQRRRSIQEAYNEEYGITPKTIQKGVRDVIRATTAAEEPETYEATPAKKMTKKEREKTIAKMEAEMKEAAKALDFERAAELRDLLLELKAEG.

The region spanning 26-413 (EGINSGKKKQ…SPEVIEQIIR (388 aa)) is the Helicase ATP-binding domain. 39-46 (GATGTGKT) is a binding site for ATP. Positions 92 to 115 (YYDYYQPEAYVPQTDTFIEKDAQI) match the Beta-hairpin motif. Residues 430 to 596 (QIDDLLGEIQ…TIQKGVRDVI (167 aa)) enclose the Helicase C-terminal domain. Positions 622 to 657 (EKTIAKMEAEMKEAAKALDFERAAELRDLLLELKAE) constitute a UVR domain.

This sequence belongs to the UvrB family. Forms a heterotetramer with UvrA during the search for lesions. Interacts with UvrC in an incision complex.

It localises to the cytoplasm. The UvrABC repair system catalyzes the recognition and processing of DNA lesions. A damage recognition complex composed of 2 UvrA and 2 UvrB subunits scans DNA for abnormalities. Upon binding of the UvrA(2)B(2) complex to a putative damaged site, the DNA wraps around one UvrB monomer. DNA wrap is dependent on ATP binding by UvrB and probably causes local melting of the DNA helix, facilitating insertion of UvrB beta-hairpin between the DNA strands. Then UvrB probes one DNA strand for the presence of a lesion. If a lesion is found the UvrA subunits dissociate and the UvrB-DNA preincision complex is formed. This complex is subsequently bound by UvrC and the second UvrB is released. If no lesion is found, the DNA wraps around the other UvrB subunit that will check the other stand for damage. This is UvrABC system protein B from Bacillus cereus (strain ZK / E33L).